Consider the following 459-residue polypeptide: Trichothecene 3-O-acetyltransferase TRI101 (459 aa).

Ca(2+) contacts are provided by aspartate 218 and isoleucine 221. CoA contacts are provided by residues lysine 253, 266–269, aspartate 302, glutamine 318, and arginine 343; that span reads FVST. Position 376 (aspartate 376) interacts with Ca(2+). CoA contacts are provided by serine 386 and lysine 390. Residue glutamate 449 participates in Ca(2+) binding.

It belongs to the trichothecene 3-O-acetyltransferase family.

It functions in the pathway sesquiterpene biosynthesis; trichothecene biosynthesis. 3-O-acetyltransferase involved in the biosynthesis of trichothecenes, a very large family of chemically related bicyclic sesquiterpene compounds acting as mycotoxins, including T2-toxin. The biosynthesis of trichothecenes begins with the cyclization of farnesyl diphosphate to trichodiene and is catalyzed by the trichodiene synthase TRI5. Trichodiene undergoes a series of oxygenations catalyzed by the cytochrome P450 monooxygenase TRI4. TRI4 controls the addition of four oxygens at C-2, C-3, C-11, and the C-12, C-13-epoxide to form the intermediate isotrichotriol. Isotrichotriol then undergoes a non-enzymatic isomerization and cyclization to form isotrichodermol. During this process, the oxygen at the C-2 position becomes the pyran ring oxygen and the hydroxyl group at C-11 is lost. More complex type A trichothecenes are built by modifying isotrichodermol through a series of paired hydroxylation and acetylation or acylation steps. Isotrichodermol is converted to isotrichodermin by the acetyltransferase TRI101. TRI101 encodes a C-3 transacetylase that acts as a self-protection or resistance factor during biosynthesis and that the presence of a free C-3 hydroxyl group is a key component of Fusarium trichothecene phytotoxicity. A second hydroxyl group is added to C-15 by the trichothecene C-15 hydroxylase TRI11, producing 15-decalonectrin, which is then acetylated by TRI3, producing calonectrin. A third hydroxyl group is added at C-4 by the cytochrome P450 monooxygenase TRI13, converting calonectrin to 3,15-diacetoxyspirpenol, which is subsequently acetylated bythe acetyltransferase TRI7. A fourth hydroxyl group is added to C-8 by the cytochrome P450 monooxygenase TRI1, followed by the addition of an isovaleryl moiety by TRI16. Finally, the acetyl group is removed from the C-3 position by the trichothecene C-3 esterase TRI8 to produce T-2 toxin. The polypeptide is Trichothecene 3-O-acetyltransferase TRI101 (Fusarium sporotrichioides).